The sequence spans 511 residues: Maturase K (511 aa).

Belongs to the intron maturase 2 family. MatK subfamily.

It localises to the plastid. Its subcellular location is the chloroplast. Its function is as follows. Usually encoded in the trnK tRNA gene intron. Probably assists in splicing its own and other chloroplast group II introns. The chain is Maturase K from Mandragora officinarum (Mandrake).